Here is a 483-residue protein sequence, read N- to C-terminus: Protein adenylyltransferase Fic (483 aa).

The helical transmembrane segment at 20–42 (AFFFIAGSLATFVFHALTSSSSV) threads the bilayer. TPR repeat units lie at residues 107–140 (ALGA…APKH) and 141–175 (PEVL…SPSN). An Inhibitory (S/T)XXXE(G/N) motif motif is present at residues 232–237 (SVGIEG). Residues glutamate 236 and 317 to 320 (VGGH) each bind ATP. The region spanning 286–421 (ITLKDILELH…IRPFVRFIAD (136 aa)) is the Fido domain. Histidine 364 is a catalytic residue. ATP-binding positions include 368 to 375 (DGNGRTSR), 400 to 401 (YY), and asparagine 408. The disordered stretch occupies residues 464-483 (SAPEPYESGSGLDSGVNGMP).

It belongs to the fic family. As to quaternary structure, homodimer.

It localises to the membrane. It carries out the reaction L-tyrosyl-[protein] + ATP = O-(5'-adenylyl)-L-tyrosyl-[protein] + diphosphate. The catalysed reaction is L-threonyl-[protein] + ATP = 3-O-(5'-adenylyl)-L-threonyl-[protein] + diphosphate. The enzyme catalyses 3-O-(5'-adenylyl)-L-threonyl-[protein] + H2O = L-threonyl-[protein] + AMP + H(+). With respect to regulation, the side chain of Glu-236 determines which of the two opposing activities (AMPylase or de-AMPylase) will take place. In response to endoplasmic reticulum stress, mediates de-AMPylase activity. Adenylyltransferase activity is inhibited by the inhibitory helix present at the N-terminus: Glu-236 binds ATP and competes with ATP-binding at Arg-375, thereby preventing adenylyltransferase activity. In unstressed cells, disengagement of Glu-236 promotes adenylyltransferase activity. Activation dissociates ATP-binding from Glu-236, allowing ordered binding of the entire ATP moiety with the alpha-phosphate in an orientation that is productive for accepting an incoming target hydroxyl side chain. Functionally, protein that can both mediate the addition of adenosine 5'-monophosphate (AMP) to specific residues of target proteins (AMPylation), and the removal of the same modification from target proteins (de-AMPylation), depending on the context. The side chain of Glu-236 determines which of the two opposing activities (AMPylase or de-AMPylase) will take place. Acts as a key regulator of the unfolded protein response (UPR) by mediating AMPylation or de-AMPylation of Hsc70-3/BiP. In unstressed cells, acts as an adenylyltransferase by mediating AMPylation of Hsc70-3/BiP at 'Thr-518', thereby inactivating it. In response to endoplasmic reticulum stress, acts as a phosphodiesterase by mediating removal of ATP (de-AMPylation) from Hsc70-3/BiP at 'Thr-518', leading to restore HSPA5/BiP activity. The protein is Protein adenylyltransferase Fic of Drosophila grimshawi (Hawaiian fruit fly).